Reading from the N-terminus, the 1366-residue chain is Collagen alpha-2(I) chain (1366 aa).

Residues 1-22 (MLSFVDTRTLLLLAVTLCLATC) form the signal peptide. Gln23 carries the pyrrolidone carboxylic acid modification. A propeptide spans 23-79 (QSLQEETVRKGPAGDRGPRGERGPPGPPGRDGEDGPTGPPGPPGPPGPPGLGGNFAA) (N-terminal propeptide). The segment covering 28–44 (ETVRKGPAGDRGPRGER) has biased composition (basic and acidic residues). A disordered region spans residues 28–1130 (ETVRKGPAGD…QPRSAPSLRP (1103 aa)). 4-hydroxyproline occurs at positions 47, 50, 62, 65, 68, and 71. A compositionally biased stretch (pro residues) spans 59 to 71 (TGPPGPPGPPGPP). At Gln80 the chain carries Pyrrolidone carboxylic acid. At Lys84 the chain carries Allysine. Gly residues predominate over residues 84 to 94 (KGVGLGPGPMG). A compositionally biased stretch (low complexity) spans 95–140 (LMGPRGPPGAAGAPGPQGFQGPAGEPGEPGQTGPAGARGPAGPPGK). 4-hydroxyproline is present on residues Pro102 and Pro108. Positions 141-155 (AGEDGHPGKPGRPGE) are enriched in basic and acidic residues. Lys177 carries the post-translational modification 5-hydroxylysine; alternate. A glycan (O-linked (Gal...) hydroxylysine; alternate) is linked at Lys177. 6 stretches are compositionally biased toward low complexity: residues 225–254 (VGAPGPAGARGSDGSVGPVGPAGPIGSAGP), 269–293 (AVGNAGPAGPAGPRGEVGLPGLSGP), 300–321 (PGANGLTGAKGAAGLPGVAGAP), 330–345 (PGPVGAAGATGARGLV), 398–410 (LRGSPGSRGLPGA), and 419–434 (PPGSRGASGPAGVRGP). 3 positions are modified to 4-hydroxyproline: Pro420, Pro441, and Pro444. 2 stretches are compositionally biased toward low complexity: residues 470–489 (LPGIDGRPGPIGPAGARGEP) and 513–531 (AGLAGARGAPGPDGNNGAQ). The span at 538–547 (GVQGGKGEQG) shows a compositional bias: gly residues. 4 stretches are compositionally biased toward low complexity: residues 594–611 (PGESGAAGPTGPIGSRGP), 623–648 (EPGVVGAVGTAGPSGPSGLPGERGAA), 663–710 (RGEI…PRGS), and 717–737 (VGPAGPNGFAGPAGAAGQPGA). Positions 738 to 747 (KGERGAKGPK) are enriched in basic and acidic residues. The span at 752–765 (VVGPTGPVGAAGPA) shows a compositional bias: low complexity. Residues 775-784 (GSRGDGGPPG) show a composition bias toward gly residues. 5 stretches are compositionally biased toward low complexity: residues 786 to 795 (TGFPGAAGRT), 849 to 876 (SGEAGTAGPPGTPGPQGLLGAPGILGLP), 884 to 932 (LPGV…NPGN), 956 to 974 (PVGAAGAPGPHGPVGPAGK), and 983 to 1001 (PSGPVGPAGAVGPRGPSGP). Residues 1005 to 1016 (RGDKGEPGEKGP) show a composition bias toward basic and acidic residues. Residues 1089–1101 (AGPPGPPGPPGPP) are compositionally biased toward pro residues. A propeptide spans 1120–1366 (DQPRSAPSLR…FVDIGPVCFK (247 aa)) (C-terminal propeptide). In terms of domain architecture, Fibrillar collagen NC1 spans 1133–1366 (YEVDATLKSL…FVDIGPVCFK (234 aa)). 3 cysteine pairs are disulfide-bonded: Cys1163–Cys1195, Cys1203–Cys1364, and Cys1272–Cys1317. Ca(2+) is bound by residues Asp1181, Asn1183, Gln1184, Cys1186, and Asp1189. The N-linked (GlcNAc...) asparagine glycan is linked to Asn1267.

The protein belongs to the fibrillar collagen family. Trimers of one alpha 2(I) and two alpha 1(I) chains. Interacts (via C-terminus) with TMEM131 (via PapD-L domain); the interaction is direct and is involved in assembly and TRAPPIII ER-to-Golgi transport complex-dependent secretion of collagen. Post-translationally, prolines at the third position of the tripeptide repeating unit (G-X-Y) are hydroxylated in some or all of the chains. Forms the fibrils of tendon, ligaments and bones. In bones the fibrils are mineralized with calcium hydroxyapatite.

It localises to the secreted. Its subcellular location is the extracellular space. It is found in the extracellular matrix. Its function is as follows. Type I collagen is a member of group I collagen (fibrillar forming collagen). This is Collagen alpha-2(I) chain (COL1A2) from Homo sapiens (Human).